A 90-amino-acid polypeptide reads, in one-letter code: Small ribosomal subunit protein uS15c (90 aa).

The protein belongs to the universal ribosomal protein uS15 family. In terms of assembly, part of the 30S ribosomal subunit.

It localises to the plastid. Its subcellular location is the chloroplast. This is Small ribosomal subunit protein uS15c (rps15-A) from Ipomoea purpurea (Common morning glory).